A 501-amino-acid chain; its full sequence is Aldehyde dehydrogenase, cytosolic 1 (501 aa).

The residue at position 2 (Ser-2) is an N-acetylserine. An N6-acetyllysine mark is found at Lys-91 and Lys-128. An NAD(+)-binding site is contributed by 246 to 251 (GSTEVG). Lys-252 bears the N6-acetyllysine mark. Glu-269 (proton acceptor) is an active-site residue. The Nucleophile role is filled by Cys-303. Residues Lys-353, Lys-367, and Lys-410 each carry the N6-acetyllysine modification. Ser-413 bears the Phosphoserine mark. 3 positions are modified to N6-acetyllysine: Lys-419, Lys-435, and Lys-495.

Belongs to the aldehyde dehydrogenase family. In terms of assembly, homotetramer. In terms of tissue distribution, very low levels in lung and liver.

Its subcellular location is the cytoplasm. It carries out the reaction an aldehyde + NAD(+) + H2O = a carboxylate + NADH + 2 H(+). It participates in alcohol metabolism; ethanol degradation; acetate from ethanol: step 2/2. Functionally, can oxidize benzaldehyde, propionaldehyde and acetaldehyde. No detectable activity with retinal. The sequence is that of Aldehyde dehydrogenase, cytosolic 1 (Aldh1a7) from Rattus norvegicus (Rat).